We begin with the raw amino-acid sequence, 208 residues long: Ubiquinone biosynthesis protein COQ4 homolog, mitochondrial (208 aa).

Residues histidine 105, aspartate 106, histidine 109, and glutamate 122 each coordinate Zn(2+).

The protein belongs to the COQ4 family. As to quaternary structure, component of a multi-subunit COQ enzyme complex. Zn(2+) serves as cofactor.

It is found in the mitochondrion inner membrane. It catalyses the reaction a 4-hydroxy-3-methoxy-5-(all-trans-polyprenyl)benzoate + H(+) = a 2-methoxy-6-(all-trans-polyprenyl)phenol + CO2. The protein operates within cofactor biosynthesis; ubiquinone biosynthesis. Lyase that catalyzes the C1-decarboxylation of 4-hydroxy-3-methoxy-5-(all-trans-polyprenyl)benzoic acid into 2-methoxy-6-(all-trans-polyprenyl)phenol during ubiquinone biosynthesis. In Nematostella vectensis (Starlet sea anemone), this protein is Ubiquinone biosynthesis protein COQ4 homolog, mitochondrial.